The following is a 684-amino-acid chain: MEWGYLLEVTSLLAALAVLQRSSGAAAASAKELACQEITVPLCKGIGYNYTYMPNQFNHDTQDEAGLEVHQFWPLVEIQCSPDLKFFLCSMYTPICLEDYKKPLPPCRSVCERAKAGCAPLMRQYGFAWPDRMRCDRLPEQGNPDTLCMDYNRTDLTTAAPSPPRRLPPPQPGEQPPSGSGHSRPPGARPPHRGGSSRGSGDTAAAPPSRGGKARPPGGGAAPCEPGCQCRAPMVSVSSERHPLYNRVKTGQIANCALPCHNPFFSQDERAFTVFWIGLWSVLCFVSTFATVSTFLIDMERFKYPERPIIFLSACYLFVSVGYLVRLVAGHEKVACSGGAPGAGGAGGAGGAATAGAGAAGAGASSPGARGEYEELGAVEQHVRYETTGPALCTVVFLLVYFFGMASSIWWVILSLTWFLAAGMKWGNEAIAGYSQYFHLAAWLVPSVKSIAVLALSSVDGDPVAGICYVGNQSLDNLRGFVLAPLVIYLFIGTMFLLAGFVSLFRIRSVIKQQGGPTKTHKLEKLMIRLGLFTVLYTVPAAVVVACLFYEQHNRPRWEATHNCPCLRDLQPDQARRPDYAVFMLKYFMCLVVGITSGVWVWSGKTLESWRALCTRCCWASKGAAVGAGAGGSGPGGGGPGPGGGGGHGGGGGSLYSDVSTGLTWRSGTASSVSYPKQMPLSQV.

An N-terminal signal peptide occupies residues 1 to 27; sequence MEWGYLLEVTSLLAALAVLQRSSGAAA. Topologically, residues 28–271 are extracellular; the sequence is ASAKELACQE…NPFFSQDERA (244 aa). The 122-residue stretch at 30 to 151 folds into the FZ domain; the sequence is AKELACQEIT…GNPDTLCMDY (122 aa). Intrachain disulfides connect C35/C96, C43/C89, C80/C118, C107/C148, and C111/C135. N-linked (GlcNAc...) asparagine glycosylation occurs at N49. 71–78 provides a ligand contact to hexadecanoate; it reads QFWPLVEI. The wnt-binding stretch occupies residues 95 to 100; it reads ICLEDY. The segment at 147 to 152 is wnt-binding; it reads LCMDYN. N152 carries an N-linked (GlcNAc...) asparagine glycan. Positions 155 to 222 are disordered; that stretch reads DLTTAAPSPP…KARPPGGGAA (68 aa). The segment covering 161–175 has biased composition (pro residues); sequence PSPPRRLPPPQPGEQ. Composition is skewed to low complexity over residues 176 to 186 and 199 to 222; these read PPSGSGHSRPP and GSGD…GGAA. Residues 272–292 form a helical membrane-spanning segment; the sequence is FTVFWIGLWSVLCFVSTFATV. Residues 293-308 are Cytoplasmic-facing; it reads STFLIDMERFKYPERP. Residues 309–329 form a helical membrane-spanning segment; the sequence is IIFLSACYLFVSVGYLVRLVA. Over 330–393 the chain is Extracellular; it reads GHEKVACSGG…RYETTGPALC (64 aa). The chain crosses the membrane as a helical span at residues 394-414; it reads TVVFLLVYFFGMASSIWWVIL. Residues 415–436 lie on the Cytoplasmic side of the membrane; sequence SLTWFLAAGMKWGNEAIAGYSQ. The chain crosses the membrane as a helical span at residues 437 to 457; the sequence is YFHLAAWLVPSVKSIAVLALS. The Extracellular segment spans residues 458–480; that stretch reads SVDGDPVAGICYVGNQSLDNLRG. Residue N472 is glycosylated (N-linked (GlcNAc...) asparagine). The helical transmembrane segment at 481–501 threads the bilayer; that stretch reads FVLAPLVIYLFIGTMFLLAGF. Residues 502 to 529 lie on the Cytoplasmic side of the membrane; that stretch reads VSLFRIRSVIKQQGGPTKTHKLEKLMIR. The chain crosses the membrane as a helical span at residues 530–550; it reads LGLFTVLYTVPAAVVVACLFY. Residues 551 to 581 are Extracellular-facing; the sequence is EQHNRPRWEATHNCPCLRDLQPDQARRPDYA. The chain crosses the membrane as a helical span at residues 582–602; it reads VFMLKYFMCLVVGITSGVWVW. Over 603-684 the chain is Cytoplasmic; sequence SGKTLESWRA…YPKQMPLSQV (82 aa). The Lys-Thr-X-X-X-Trp motif, mediates interaction with the PDZ domain of Dvl family members motif lies at 605–610; it reads KTLESW. Residues 630 to 654 show a composition bias toward gly residues; that stretch reads AGGSGPGGGGPGPGGGGGHGGGGGS. A disordered region spans residues 630 to 655; the sequence is AGGSGPGGGGPGPGGGGGHGGGGGSL. A PDZ-binding motif is present at residues 682–684; sequence SQV.

Belongs to the G-protein coupled receptor Fz/Smo family. In terms of assembly, component of a Wnt-signaling complex that contains a WNT protein, a FZD protein and LRP5 or LRP6. Interacts directly with LRP5 or LRP6; the interaction is promoted by Wnt-binding and signaling and inhibited by DKK1. Interacts (via the PDZ-binding motif) with GPOC (via its PDZ domain). Interacts with RSPO1 and RSPO3. Interacts with glypican GPC3. Post-translationally, ubiquitinated by ZNRF3, leading to its degradation by the proteasome.

The protein resides in the membrane. The protein localises to the golgi apparatus. Its subcellular location is the cell membrane. In terms of biological role, receptor for Wnt proteins. Component of the Wnt-Fzd-LRP5-LRP6 complex that triggers beta-catenin signaling through inducing aggregation of receptor-ligand complexes into ribosome-sized signalosomes. The beta-catenin canonical signaling pathway leads to the activation of disheveled proteins, inhibition of GSK-3 kinase, nuclear accumulation of beta-catenin and activation of Wnt target genes. A second signaling pathway involving PKC and calcium fluxes has been seen for some family members, but it is not yet clear if it represents a distinct pathway or if it can be integrated in the canonical pathway, as PKC seems to be required for Wnt-mediated inactivation of GSK-3 kinase. Both pathways seem to involve interactions with G-proteins. May be involved in transduction and intercellular transmission of polarity information during tissue morphogenesis and/or in differentiated tissues. Coreceptor along with RYK of Wnt proteins, such as WNT1. The protein is Frizzled-8 (Fzd8) of Rattus norvegicus (Rat).